Reading from the N-terminus, the 456-residue chain is tRNA-2-methylthio-N(6)-dimethylallyladenosine synthase (456 aa).

Residues 18 to 136 form the MTTase N-terminal domain; it reads EFFFIQTFGC…FPEYLHRVQV (119 aa). [4Fe-4S] cluster is bound by residues Cys27, Cys63, Cys97, Cys173, Cys177, and Cys180. A Radical SAM core domain is found at 159-391; the sequence is RKSNVKAFVT…AVNEGIVVGN (233 aa). A TRAM domain is found at 392–455; the sequence is KAAEGKIYEV…SFSLVGEVVE (64 aa).

It belongs to the methylthiotransferase family. MiaB subfamily. Monomer. [4Fe-4S] cluster is required as a cofactor.

It localises to the cytoplasm. The enzyme catalyses N(6)-dimethylallyladenosine(37) in tRNA + (sulfur carrier)-SH + AH2 + 2 S-adenosyl-L-methionine = 2-methylsulfanyl-N(6)-dimethylallyladenosine(37) in tRNA + (sulfur carrier)-H + 5'-deoxyadenosine + L-methionine + A + S-adenosyl-L-homocysteine + 2 H(+). Catalyzes the methylthiolation of N6-(dimethylallyl)adenosine (i(6)A), leading to the formation of 2-methylthio-N6-(dimethylallyl)adenosine (ms(2)i(6)A) at position 37 in tRNAs that read codons beginning with uridine. This Clostridium botulinum (strain Alaska E43 / Type E3) protein is tRNA-2-methylthio-N(6)-dimethylallyladenosine synthase.